A 385-amino-acid polypeptide reads, in one-letter code: Type III polyketide synthase C (385 aa).

56 to 63 (KLQHLCKS) serves as a coordination point for CoA. Cys-165 functions as the Nucleophile in the catalytic mechanism. A substrate-binding site is contributed by 217–218 (GD). Residues Leu-267, 307–310 (GGPA), and Ala-310 contribute to the CoA site.

Belongs to the thiolase-like superfamily. Chalcone/stilbene synthases family. Homodimer.

Its subcellular location is the endoplasmic reticulum. It participates in secondary metabolite biosynthesis; flavonoid biosynthesis. In terms of biological role, plant type III polyketide synthases (PKSs) that catalyzes the condensation of malonyl-CoA units with various CoA ester starter molecules to generate a diverse array of natural products including long-chain alkyl alpha-pyrones. This is Type III polyketide synthase C from Arabidopsis thaliana (Mouse-ear cress).